Here is a 989-residue protein sequence, read N- to C-terminus: Vacuolar membrane protease (989 aa).

A disordered region spans residues 1–25 (MDRQSLRTTLRAMDASNENGSAKGA). At 1-41 (MDRQSLRTTLRAMDASNENGSAKGAKKTTIGSFVRWTFGFN) the chain is on the cytoplasmic side. The chain crosses the membrane as a helical span at residues 42–62 (SVPLTTLVTITTVLLGLLVYV). Residues 63–383 (STSVNPPDVT…YLFIILPLQY (321 aa)) are Vacuolar-facing. The Zn(2+) site is built by His-181 and Asp-193. The Proton acceptor role is filled by Glu-227. Glu-228 lines the Zn(2+) pocket. Residue Asn-245 is glycosylated (N-linked (GlcNAc...) asparagine). Zn(2+)-binding residues include Glu-253 and His-325. A helical transmembrane segment spans residues 384 to 404 (IFVISCLTLAVGPIFVGFLFL). The Cytoplasmic portion of the chain corresponds to 405–426 (LVLRKQINAGTSETILGGWLRS). Residues 427–447 (IVSVLVSVVATYFVVETLHLG) traverse the membrane as a helical segment. Residues 448–460 (NELYVVRSFYTPL) are Vacuolar-facing. A helical membrane pass occupies residues 461–481 (FAGLGTFIFVNYVLLGFFHFV). Over 482–488 (RPVCDQK) the chain is Cytoplasmic. A helical membrane pass occupies residues 489–509 (LIILLELSVVLWVLLLLSVIH). At 510-520 (EATHKATGEYH) the chain is on the vacuolar side. Residues 521-541 (FLILYIVVATASILGLFGHLV) form a helical membrane-spanning segment. The Cytoplasmic portion of the chain corresponds to 542-611 (TSTETSTFVE…IAVSMGYDWS (70 aa)). Residues 548-576 (TFVEGPEDEEDTVDASEATETSPLLPEAS) form a disordered region. The segment covering 552–561 (GPEDEEDTVD) has biased composition (acidic residues). Residues 612–632 (IQFLLVVPITFFVTFGLAASL) traverse the membrane as a helical segment. The Vacuolar portion of the chain corresponds to 633-648 (LDGLHQTPLESEKSAD). A helical transmembrane segment spans residues 649 to 669 (FVYTTITAMSVLVGITFLPFV). Residues 670–673 (HKLQ) lie on the Cytoplasmic side of the membrane. A helical membrane pass occupies residues 674 to 694 (VFVPIVVVGVAVTASFVHILS). The Vacuolar segment spans residues 695 to 989 (PPFSSNAPAK…LVEVSKYVEL (295 aa)). Residues Asn-745, Asn-793, and Asn-822 are each glycosylated (N-linked (GlcNAc...) asparagine).

This sequence belongs to the peptidase M28 family. Zn(2+) serves as cofactor.

Its subcellular location is the vacuole membrane. Functionally, may be involved in vacuolar sorting and osmoregulation. The chain is Vacuolar membrane protease from Yarrowia lipolytica (strain CLIB 122 / E 150) (Yeast).